Consider the following 122-residue polypeptide: Small ribosomal subunit protein uS13 (122 aa).

The disordered stretch occupies residues 97 to 122 (PCRGQRTKTNARTRKGPARTVAGKKK).

Belongs to the universal ribosomal protein uS13 family. In terms of assembly, part of the 30S ribosomal subunit. Forms a loose heterodimer with protein S19. Forms two bridges to the 50S subunit in the 70S ribosome.

Functionally, located at the top of the head of the 30S subunit, it contacts several helices of the 16S rRNA. In the 70S ribosome it contacts the 23S rRNA (bridge B1a) and protein L5 of the 50S subunit (bridge B1b), connecting the 2 subunits; these bridges are implicated in subunit movement. Contacts the tRNAs in the A and P-sites. This is Small ribosomal subunit protein uS13 from Geobacter sp. (strain M21).